The chain runs to 192 residues: uncharacterized protein (192 aa).

The interval 17-73 (MLRGSGKKPIQRLAKAPAATASSKTSEWRATTAYGFLPAGGDVRPHSPRYESQGVLS) is disordered. Residues 30–41 (AKAPAATASSKT) show a composition bias toward low complexity.

This is an uncharacterized protein from Sinorhizobium fredii (strain NBRC 101917 / NGR234).